The chain runs to 335 residues: Epidermal differentiation-specific protein (335 aa).

Beta/gamma crystallin 'Greek key' domains are found at residues 2 to 42 (NTIT…KIVG), 43 to 81 (QPWILHQDINYSGQCLPLEEGEYSGISMNDGASSLRLIT), 87 to 126 (PQITVYEHVNGGGKALVLTEETNLAFGNMHDNISSHRVQR), and 127 to 169 (GAWA…YPLR).

Belongs to the beta/gamma-crystallin family. In terms of tissue distribution, epidermis specific.

This chain is Epidermal differentiation-specific protein, found in Cynops pyrrhogaster (Japanese fire-bellied newt).